Reading from the N-terminus, the 29-residue chain is Cyclotide cter-L (29 aa).

A cross-link (cyclopeptide (His-Asp)) is located at residues 1 to 29; the sequence is HEPCGESCVFIPCITTVVGCSCKNKVCYD. Intrachain disulfides connect Cys-4-Cys-20, Cys-8-Cys-22, and Cys-13-Cys-27.

Contains 3 disulfide bonds. In terms of processing, this is a cyclic peptide.

Functionally, probably participates in a plant defense mechanism. In Clitoria ternatea (Butterfly pea), this protein is Cyclotide cter-L.